The primary structure comprises 292 residues: Insulin-like growth factor-binding protein 3 (292 aa).

A signal peptide spans Met1–Ala27. The IGFBP N-terminal domain maps to Pro36–Ala119. 6 disulfides stabilise this stretch: Cys40-Cys69, Cys43-Cys71, Cys51-Cys72, Cys60-Cys75, Cys83-Cys96, and Cys90-Cys116. N-linked (GlcNAc...) asparagine glycans are attached at residues Asn118, Asn124, and Asn137. Disordered stretches follow at residues Ala127 to Val161 and Tyr191 to Tyr211. Positions Leu129–Thr139 are enriched in polar residues. The residue at position 149 (Ser149) is a Phosphoserine. Residues Glu192–Ser203 show a composition bias toward polar residues. Asn200 is a glycosylation site (N-linked (GlcNAc...) asparagine). Ser202 is subject to Phosphoserine. Positions Tyr211–Cys286 constitute a Thyroglobulin type-1 domain. 3 cysteine pairs are disulfide-bonded: Cys214–Cys241, Cys252–Cys263, and Cys265–Cys286.

In terms of assembly, interacts with XLKD1. Binds IGF2 more than IGF1. Forms a ternary complex of about 140 to 150 kDa with IGF1 or IGF2 and a 85 kDa glycoprotein (ALS). Interacts with humanin; humanin competes with importin KPNB1 for binding to IGFBP3, blocking IGFBP3 nuclear import and IGFBP3-mediated apoptosis. Interacts with TMEM219. Interacts with RXRA; this interaction modulates the transcriptional activity of RXRA. Interacts with LRP1; this interaction mediates cell growth inhibition independent of IGF1. In terms of processing, phosphorylated by FAM20C in the extracellular medium. Phosphorylated by CK2; resulting in decreased nuclear localization.

Its subcellular location is the secreted. It localises to the nucleus. Multifunctional protein that plays a critical role in regulating the availability of IGFs such as IGF1 and IGF2 to their receptors and thereby regulates IGF-mediated cellular processes including proliferation, differentiation, and apoptosis in a cell-type specific manner. Also exhibits IGF-independent antiproliferative and apoptotic effects mediated by its receptor TMEM219/IGFBP-3R. Inhibits the positive effect of humanin on insulin sensitivity. Promotes testicular germ cell apoptosis. Acts via LRP-1/alpha2M receptor, also known as TGF-beta type V receptor, to mediate cell growth inhibition independent of IGF1. Mechanistically, induces serine-specific dephosphorylation of IRS1 or IRS2 upon ligation to its receptor, leading to the inhibitory cascade. In the nucleus, interacts with transcription factors such as retinoid X receptor-alpha/RXRA to regulate transcriptional signaling and apoptosis. This chain is Insulin-like growth factor-binding protein 3 (Igfbp3), found in Rattus norvegicus (Rat).